Reading from the N-terminus, the 105-residue chain is Met repressor (105 aa).

It belongs to the MetJ family. As to quaternary structure, homodimer.

The protein resides in the cytoplasm. Functionally, this regulatory protein, when combined with SAM (S-adenosylmethionine) represses the expression of the methionine regulon and of enzymes involved in SAM synthesis. This is Met repressor from Hamiltonella defensa subsp. Acyrthosiphon pisum (strain 5AT).